The chain runs to 542 residues: Glucose-6-phosphate isomerase (542 aa).

Glu-354 acts as the Proton donor in catalysis. Active-site residues include His-385 and Lys-505.

It belongs to the GPI family.

Its subcellular location is the cytoplasm. The enzyme catalyses alpha-D-glucose 6-phosphate = beta-D-fructose 6-phosphate. Its pathway is carbohydrate biosynthesis; gluconeogenesis. It functions in the pathway carbohydrate degradation; glycolysis; D-glyceraldehyde 3-phosphate and glycerone phosphate from D-glucose: step 2/4. Catalyzes the reversible isomerization of glucose-6-phosphate to fructose-6-phosphate. This chain is Glucose-6-phosphate isomerase, found in Nitrosospira multiformis (strain ATCC 25196 / NCIMB 11849 / C 71).